Consider the following 156-residue polypeptide: Small ribosomal subunit protein uS7 (156 aa).

Belongs to the universal ribosomal protein uS7 family. Part of the 30S ribosomal subunit. Contacts proteins S9 and S11.

Its function is as follows. One of the primary rRNA binding proteins, it binds directly to 16S rRNA where it nucleates assembly of the head domain of the 30S subunit. Is located at the subunit interface close to the decoding center, probably blocks exit of the E-site tRNA. The polypeptide is Small ribosomal subunit protein uS7 (Rhizobium rhizogenes (strain K84 / ATCC BAA-868) (Agrobacterium radiobacter)).